A 1430-amino-acid chain; its full sequence is Death-associated protein kinase 1 (1430 aa).

The Protein kinase domain occupies 13–275 (YDTGEELGSG…IQDSLQHPWI (263 aa)). Residues 19-27 (LGSGQFAVV), K42, 94-96 (ELV), and E100 contribute to the ATP site. D139 serves as the catalytic Proton acceptor. D161 lines the ATP pocket. Residues 267-334 (QDSLQHPWIK…RSNMSVARSD (68 aa)) form a calmodulin-binding region. S289 bears the Phosphoserine; by RPS6KA1 and RPS6KA3 mark. An autoinhibitory domain region spans residues 292-301 (NMEKFKKFAA). A Phosphoserine; by autocatalysis modification is found at S308. 2 positions are modified to phosphoserine: S319 and S333. ANK repeat units lie at residues 378–407 (HGTP…RIDV), 411–440 (GGSN…PLDV), 444–473 (SGEM…NPNI), 477–506 (EEET…NVNI), 510–539 (EGET…DLNA), 543–572 (DGHI…FVDY), 576–605 (HGNT…NLDI), and 609–638 (YGRT…SVEA). A Roc domain is found at 681–955 (TQNLQPRIKL…NHLQEIRSQI (275 aa)). S734 is modified (phosphoserine; by MAPK1). Residues 875-904 (KLKNPLQVVLVATHADIMNVPRPAGGEFGY) form an ANK 9 repeat. The residue at position 1115 (S1115) is a Phosphoserine. The ANK 10 repeat unit spans residues 1162–1196 (EGDADIRLWVNGCKLANRGAELLVLLVNHGQGIEV). The Death domain maps to 1312-1396 (KLSRLLDPPD…DAADFLLKAS (85 aa)).

Belongs to the protein kinase superfamily. CAMK Ser/Thr protein kinase family. DAP kinase subfamily. Interacts with KLHL20. Interacts (via death domain) with MAPK1 and MAPK3. Interacts with MAP1B (via N-terminus). Interacts with PRKD1 in an oxidative stress-regulated manner. Interacts with PIN1, PDCD6, BECN1, TSC2 and STX1A. Interacts (via kinase domain) with DAPK3 (via kinase domain). Interacts with GRINB. Interacts (via death domain) with UNC5B (via death domain). Interacts with UNC5C (via death domain). Mg(2+) is required as a cofactor. In terms of processing, ubiquitinated by the BCR(KLHL20) E3 ubiquitin ligase complex, leading to its degradation by the proteasome. Post-translationally, removal of the C-terminal tail of isoform 2 (corresponding to amino acids 296-337 of isoform 2) by proteolytic cleavage stimulates maximally its membrane-blebbing function. In response to mitogenic stimulation (PMA or EGF), phosphorylated at Ser-289; phosphorylation suppresses DAPK1 pro-apoptotic function. Autophosphorylation at Ser-308 inhibits its catalytic activity. Phosphorylation at Ser-734 by MAPK1 increases its catalytic activity and promotes cytoplasmic retention of MAPK1. Endoplasmic-stress can cause dephosphorylation at Ser-308. In terms of tissue distribution, isoform 2 is expressed in normal intestinal tissue as well as in colorectal carcinomas.

It is found in the cytoplasm. The protein localises to the cytoskeleton. The enzyme catalyses L-seryl-[protein] + ATP = O-phospho-L-seryl-[protein] + ADP + H(+). It carries out the reaction L-threonyl-[protein] + ATP = O-phospho-L-threonyl-[protein] + ADP + H(+). Its activity is regulated as follows. Activated by Ca(2+)/calmodulin. Regulated by a locking mechanism, involving autophosphorylation at Ser-308 and calmodulin binding. In the inactive state, Ser-308 is phosphorylated. Activation involves its dephosphorylation and a release-of-autoinhibition mechanism where binding of calmodulin induces a conformational change that relieves the steric block of the active site by the autoinhibitory domain. Activity is modulated by UNC5B and NTN1. UNC5B activates it by inhibiting the phosphorylation at Ser-308, whereas NTN1 inhibits UNC5B-mediated activation of DAPK1. Endoplasmic-stress activates by causing Ser-308 dephosphorylation. Functionally, calcium/calmodulin-dependent serine/threonine kinase involved in multiple cellular signaling pathways that trigger cell survival, apoptosis, and autophagy. Regulates both type I apoptotic and type II autophagic cell deaths signal, depending on the cellular setting. The former is caspase-dependent, while the latter is caspase-independent and is characterized by the accumulation of autophagic vesicles. Phosphorylates PIN1 resulting in inhibition of its catalytic activity, nuclear localization, and cellular function. Phosphorylates TPM1, enhancing stress fiber formation in endothelial cells. Phosphorylates STX1A and significantly decreases its binding to STXBP1. Phosphorylates PRKD1 and regulates JNK signaling by binding and activating PRKD1 under oxidative stress. Phosphorylates BECN1, reducing its interaction with BCL2 and BCL2L1 and promoting the induction of autophagy. Phosphorylates TSC2, disrupting the TSC1-TSC2 complex and stimulating mTORC1 activity in a growth factor-dependent pathway. Phosphorylates RPS6, MYL9 and DAPK3. Acts as a signaling amplifier of NMDA receptors at extrasynaptic sites for mediating brain damage in stroke. Cerebral ischemia recruits DAPK1 into the NMDA receptor complex and it phosphorylates GRINB at Ser-1303 inducing injurious Ca(2+) influx through NMDA receptor channels, resulting in an irreversible neuronal death. Required together with DAPK3 for phosphorylation of RPL13A upon interferon-gamma activation which is causing RPL13A involvement in transcript-selective translation inhibition. Isoform 2 cannot induce apoptosis but can induce membrane blebbing. The polypeptide is Death-associated protein kinase 1 (DAPK1) (Homo sapiens (Human)).